The sequence spans 416 residues: Lactose permease (416 aa).

Residues 1–13 (MKLSELAPRERHN) are Cytoplasmic-facing. The helical transmembrane segment at 14-34 (FIYFMLFFFFYYFIMSAYFPF) threads the bilayer. The Periplasmic portion of the chain corresponds to 35–50 (FPVWLAEVNHLTKTET). A helical transmembrane segment spans residues 51-71 (GIVFSCISLFAIIFQPVFGLI). The Cytoplasmic portion of the chain corresponds to 72-80 (SDKLGLRKH). A helical membrane pass occupies residues 81–101 (LLWTITILLILFAPFFIFVFS). Position 102 (Pro102) is a topological domain, periplasmic. A helical transmembrane segment spans residues 103–123 (LLQMNIMAGALVGGVYLGIVF). Residues 124–149 (SSRSGAVEAYIERVSRANRFEYGKVR) are Cytoplasmic-facing. Transmembrane regions (helical) follow at residues 150–170 (VSGCVGWALCASITGILFSID) and 171–191 (PNITFWIASGFALILGVLLWV). The Cytoplasmic portion of the chain corresponds to 192 to 223 (SKPESSNSAEVIDALGANRQAFSMRTAAELFR). The chain crosses the membrane as a helical span at residues 224–244 (MPRFWGFIIYVVGVASVYDVF). The Periplasmic segment spans residues 245–267 (DQQFANFFKGFFSSPQRGTEVFG). The chain crosses the membrane as a helical span at residues 268–288 (FVTTGGELLNALIMFCAPAII). The Cytoplasmic portion of the chain corresponds to 289–295 (NRIGAKN). 2 helical membrane-spanning segments follow: residues 296-316 (ALLIAGLIMSVRILGSSFATS) and 317-337 (AVEVIILKMLHMFEIPFLLVG). The Cytoplasmic portion of the chain corresponds to 338 to 353 (TFKYISSAFKGKLSAT). A helical membrane pass occupies residues 354 to 374 (LFLIGFNLSKQLSSVVLSAWV). Residues 375–384 (GRMYDTVGFH) are Periplasmic-facing. A helical transmembrane segment spans residues 385–405 (QAYLILGCITLSFTVISLFTL). The Cytoplasmic portion of the chain corresponds to 406 to 416 (KGSKTLLPATA).

This sequence belongs to the major facilitator superfamily. Oligosaccharide:H(+) symporter (OHS) (TC 2.A.1.5) family.

It is found in the cell inner membrane. It carries out the reaction lactose(in) + H(+)(in) = lactose(out) + H(+)(out). In terms of biological role, responsible for transport of beta-galactosides into the cell, with the concomitant import of a proton (symport system). This is Lactose permease (lacY) from Klebsiella oxytoca.